Reading from the N-terminus, the 504-residue chain is MAFPGPRVLVVGSGIAGLGAAQKLCSHRAAPHLRVLEATASAGGRIRSERCFGGVVELGAHWIHGPSQDNPVFQLAAEFGLLGEKELSEENQLVDTGGHVALPSMIWSSSGTSVSLELMTEMARLFYGLIERTREFLNESETPMASVGEFLKKEISQQVASWTEDDEDTRKRKLAILNTFFNIECCVSGTHSMDLVALAPFGEYTVLPGLDCILAGGYQGLTDRILASLPKDTVAFDKPVKTIHWNGSFQEAAFPGETFPVLVECEDGARLPAHHVIVTVPLGFLKEHQDTFFEPPLPAKKAEAIKKLGFGTNNKIFLEFEEPFWEPDCQFIQVVWEDTSPLQDTALSLQDTWFKKLIGFLVQPSFESSHVLCGFIAGLESEFMETLSDEEVLLSLTQVLRRVTGNPQLPAAKSVRRSQWHSAPYTRGSYSYVAVGSTGDDLDLMAQPLPEDGTGTQLQVLFAGEATHRTFYSTTHGALLSGWREADRLVSLWDSQVEQSRPRL.

Residues A16, E37, R45, and 61–62 (HW) each bind FAD. Residues H64 and V187 each coordinate substrate. Position 240 (V240) interacts with FAD. Position 313 (N313) interacts with substrate. Residues E465 and 474-475 (TT) contribute to the FAD site. The Microbody targeting signal motif lies at 502-504 (PRL).

Belongs to the flavin monoamine oxidase family. Monomer. FAD serves as cofactor. In terms of tissue distribution, widely expressed at different developmental stages. Expressed at high level in the liver and the stomach, expressed at lower level in heart, spleen, thymus, small intestine, muscle, pancreas, uterus, and breast and expressed at very low level in brain, kidney, lung, testis, skin, adrenal gland and prostate gland.

The protein localises to the peroxisome. Its subcellular location is the cytoplasm. It carries out the reaction N(1)-acetylspermine + O2 + H2O = 3-acetamidopropanal + spermidine + H2O2. It catalyses the reaction N(1)-acetylspermidine + O2 + H2O = 3-acetamidopropanal + putrescine + H2O2. The catalysed reaction is N(1),N(12)-diacetylspermine + O2 + H2O = 3-acetamidopropanal + N(1)-acetylspermidine + H2O2. Its pathway is amine and polyamine metabolism; spermine metabolism. In terms of biological role, flavoenzyme which catalyzes the oxidation of N(1)-acetylspermine to spermidine and is thus involved in the polyamine back-conversion. Can also oxidize N(1)-acetylspermidine to putrescine. Substrate specificity: N(1)-acetylspermine = N(1)-acetylspermidine &gt; N(1),N(12)-diacylspermine &gt;&gt; spermine. Does not oxidize spermidine. Plays an important role in the regulation of polyamine intracellular concentration and has the potential to act as a determinant of cellular sensitivity to the antitumor polyamine analogs. This chain is Peroxisomal N(1)-acetyl-spermine/spermidine oxidase (Paox), found in Mus musculus (Mouse).